An 839-amino-acid polypeptide reads, in one-letter code: A disintegrin and metalloproteinase with thrombospondin motifs 4 (839 aa).

The first 51 residues, 1–51, serve as a signal peptide directing secretion; sequence MSHMDSHPGRGLADGWLWGIQPRLLLPTVPVSGSRLVWLLLLASLLPSAWP. Positions 52–212 are excised as a propeptide; sequence ASPLPREEEI…PSPSPRRAKR (161 aa). N-linked (GlcNAc...) asparagine glycosylation occurs at Asn68. The segment at 166–209 is disordered; sequence EGGAPNSAGGPGAHILRRKSPVSGQGPMCNVKAPPGKPSPSPRR. Positions 192–199 match the Cysteine switch motif; sequence PMCNVKAP. Cys194 is a binding site for Zn(2+). The Peptidase M12B domain occupies 218 to 428; it reads RFVETLVVAD…GFGHCLLDKP (211 aa). 11 disulfide bridges follow: Cys293-Cys345, Cys322-Cys327, Cys339-Cys423, Cys377-Cys407, Cys449-Cys472, Cys460-Cys482, Cys467-Cys501, Cys495-Cys506, Cys532-Cys569, Cys536-Cys574, and Cys547-Cys559. His361 is a binding site for Zn(2+). Glu362 is an active-site residue. Positions 365 and 371 each coordinate Zn(2+). Positions 437 to 519 constitute a Disintegrin domain; that stretch reads TFPGKDYDAD…DQLQAFNVPQ (83 aa). One can recognise a TSP type-1 domain in the interval 520 to 575; the sequence is AGGWGPWGSWGDCSRSCGGGVQFSSRDCTRPVPRNGGKYCEGRRTRFRSCNTQDCP. Positions 686–839 are spacer; that stretch reads SKQSGSFKKF…LRRRSWAGRK (154 aa).

In terms of assembly, interacts with SRPX2. Zn(2+) is required as a cofactor. In terms of processing, the precursor is cleaved by a furin endopeptidase. Post-translationally, glycosylated. Can be O-fucosylated by POFUT2 on a serine or a threonine residue found within the consensus sequence C1-X(2)-(S/T)-C2-G of the TSP type-1 repeat domains where C1 and C2 are the first and second cysteine residue of the repeat, respectively. Fucosylated repeats can then be further glycosylated by the addition of a beta-1,3-glucose residue by the glucosyltransferase, B3GALTL. Fucosylation mediates the efficient secretion of ADAMTS family members. Can also be C-glycosylated with one or two mannose molecules on tryptophan residues within the consensus sequence W-X-X-W of the TPRs, and N-glycosylated. These other glycosylations can also facilitate secretion.

It is found in the secreted. Its subcellular location is the extracellular space. The protein resides in the extracellular matrix. The enzyme catalyses Glutamyl endopeptidase. Bonds cleaved include 370-Thr-Glu-Gly-Glu-|-Ala-Arg-Gly-Ser-377 in the interglobular domain of mammalian aggrecan.. Functionally, cleaves aggrecan, a cartilage proteoglycan, at the '392-Glu-|-Ala-393' site and may be involved in its turnover. Also cleaves COMP. May play an important role in the destruction of aggrecan in arthritic diseases. The polypeptide is A disintegrin and metalloproteinase with thrombospondin motifs 4 (ADAMTS4) (Bos taurus (Bovine)).